The primary structure comprises 222 residues: Interleukin-12 subunit alpha (222 aa).

The N-terminal stretch at 1–25 (MCPPRGLLLVAILVLLNHLDHLSLA) is a signal peptide. Disulfide bonds link Cys-40–Cys-113, Cys-67–Cys-199, and Cys-88–Cys-126. Residues Asn-42, Asn-96, and Asn-110 are each glycosylated (N-linked (GlcNAc...) asparagine).

The protein belongs to the IL-6 superfamily. As to quaternary structure, heterodimer with IL12B; disulfide-linked. This heterodimer is known as interleukin IL-12. Heterodimer with EBI3/IL27B; not disulfide-linked. This heterodimer is known as interleukin IL-35. Interacts with NBR1; this interaction promotes IL-12 secretion.

It localises to the secreted. Its function is as follows. Heterodimerizes with IL12B to form the IL-12 cytokine or with EBI3/IL27B to form the IL-35 cytokine. IL-12 is primarily produced by professional antigen-presenting cells (APCs) such as B-cells and dendritic cells (DCs) as well as macrophages and granulocytes and regulates T-cell and natural killer-cell responses, induces the production of interferon-gamma (IFN-gamma), favors the differentiation of T-helper 1 (Th1) cells and is an important link between innate resistance and adaptive immunity. Mechanistically, exerts its biological effects through a receptor composed of IL12R1 and IL12R2 subunits. Binding to the receptor results in the rapid tyrosine phosphorylation of a number of cellular substrates including the JAK family kinases TYK2 and JAK2. In turn, recruited STAT4 gets phosphorylated and translocates to the nucleus where it regulates cytokine/growth factor responsive genes. As part of IL-35, plays essential roles in maintaining the immune homeostasis of the liver microenvironment and also functions as an immune-suppressive cytokine. Mediates biological events through unconventional receptors composed of IL12RB2 and gp130/IL6ST heterodimers or homodimers. Signaling requires the transcription factors STAT1 and STAT4, which form a unique heterodimer that binds to distinct DNA sites. The chain is Interleukin-12 subunit alpha (IL12A) from Equus caballus (Horse).